The chain runs to 607 residues: F-box protein At-B (607 aa).

The 39-residue stretch at 9–47 folds into the F-box domain; it reads LAEEILKRLDLENLCSVACVSTTLRSAVVSGVLPSLTSL. LRR repeat units lie at residues 51 to 76, 77 to 99, 100 to 125, 130 to 155, 228 to 253, 262 to 286, 295 to 320, 321 to 346, 347 to 372, 373 to 397, 398 to 422, 424 to 447, 448 to 477, 478 to 503, 504 to 536, and 537 to 563; these read VFSP…TLNC, LRLN…HLLR, CSLL…TLEM, SPDV…QLNI, LDLI…DLED, DNDL…SLVR, FKRI…RLGG, FPKV…EVRG, AFLL…RLST, CPLI…DLGS, CKSI…NLAG, DVTD…SLRG, CRRV…DLGH, MPGI…SIRS, CFHV…NVHN, and CVSL…GMGQ.

The chain is F-box protein At-B (ATB) from Arabidopsis thaliana (Mouse-ear cress).